The chain runs to 48 residues: Small polypeptide DEVIL 14 (48 aa).

A helical transmembrane segment spans residues 4-23 (TVVLRCCTSVTKVRTWKRCS). The required for DVL/RTFL small polypeptide activity stretch occupies residues 17 to 48 (RTWKRCSKQIKEQRARLYIIWKCAVFLLSSHD).

Belongs to the DVL/RTFL small polypeptides family.

The protein resides in the cell membrane. Small polypeptide acting as a regulatory molecule which coordinates cellular responses required for differentiation, growth and development, probably by restricting polar cell proliferation in lateral organs and coordinating socket cell recruitment and differentiation at trichome sites. This is Small polypeptide DEVIL 14 from Arabidopsis thaliana (Mouse-ear cress).